The primary structure comprises 162 residues: Nucleotide-binding protein SCO4614 (162 aa).

It belongs to the YajQ family.

Its subcellular location is the cytoplasm. It is found in the nucleoid. Functionally, nucleotide-binding protein. The protein is Nucleotide-binding protein SCO4614 of Streptomyces coelicolor (strain ATCC BAA-471 / A3(2) / M145).